The chain runs to 514 residues: Palmitoyltransferase pfa3 (514 aa).

Topologically, residues 1-31 (MATLAMSTPSSPTWPKRRPKAWAMRCERYCC) are cytoplasmic. The chain crosses the membrane as a helical span at residues 32–52 (AAASYFPLAFVYSLTTWAVYV). Topologically, residues 53–64 (EASVGLKPSSSS) are lumenal. Residues 65 to 85 (WIGLPSSILGVVLYLALNISY) form a helical membrane-spanning segment. The Cytoplasmic portion of the chain corresponds to 86–174 (TTAVFTDPGS…TCVGLRNYKA (89 aa)). Positions 130–180 (RFCKKCQCPKPDRAHHCSTCKRCVLKMDHHCPWLATCVGLRNYKAFLLFLI) constitute a DHHC domain. The chain crosses the membrane as a helical span at residues 175–195 (FLLFLIYTSLFCWVDFGVSAI). At 196–209 (WIWTEVFNDTRYMD) the chain is on the lumenal side. The chain crosses the membrane as a helical span at residues 210-230 (GILPVNVVLLSILGGIIGLVL). Residues 231–514 (TGFTAWHISL…SREDDWRDWD (284 aa)) are Cytoplasmic-facing. 2 disordered regions span residues 307-336 (VTRPEEGEESSDNLTPAQQALSRSYADLER) and 436-514 (GNEL…RDWD). A compositionally biased stretch (polar residues) spans 318–328 (DNLTPAQQALS). Positions 505 to 514 (SREDDWRDWD) are enriched in basic and acidic residues.

It belongs to the DHHC palmitoyltransferase family. PFA3 subfamily. In terms of processing, autopalmitoylated.

The protein resides in the vacuole membrane. The enzyme catalyses L-cysteinyl-[protein] + hexadecanoyl-CoA = S-hexadecanoyl-L-cysteinyl-[protein] + CoA. In terms of biological role, palmitoyltransferase specific for VAC8. Palmitoylates VAC8 at one or more of its N-terminal cysteine residues, which is required for its proper membrane localization. This Emericella nidulans (strain FGSC A4 / ATCC 38163 / CBS 112.46 / NRRL 194 / M139) (Aspergillus nidulans) protein is Palmitoyltransferase pfa3 (pfa3).